Consider the following 144-residue polypeptide: Large ribosomal subunit protein uL24 (144 aa).

The tract at residues 1–22 is disordered; it reads MKFNKMVSSDRGKNRKRHFNAP. Basic residues predominate over residues 13-22; the sequence is KNRKRHFNAP.

It belongs to the universal ribosomal protein uL24 family.

The sequence is that of Large ribosomal subunit protein uL24 (RPL26) from Littorina littorea (Common periwinkle).